Here is a 1286-residue protein sequence, read N- to C-terminus: DNA-directed RNA polymerase subunit beta' (1286 aa).

Zn(2+)-binding residues include C58, C60, C73, and C76. The Mg(2+) site is built by D533, D535, and D537. Positions 867, 944, 951, and 954 each coordinate Zn(2+).

It belongs to the RNA polymerase beta' chain family. As to quaternary structure, the RNAP catalytic core consists of 2 alpha, 1 beta, 1 beta' and 1 omega subunit. When a sigma factor is associated with the core the holoenzyme is formed, which can initiate transcription. The cofactor is Mg(2+). Zn(2+) serves as cofactor.

The catalysed reaction is RNA(n) + a ribonucleoside 5'-triphosphate = RNA(n+1) + diphosphate. Its function is as follows. DNA-dependent RNA polymerase catalyzes the transcription of DNA into RNA using the four ribonucleoside triphosphates as substrates. In Tropheryma whipplei (strain TW08/27) (Whipple's bacillus), this protein is DNA-directed RNA polymerase subunit beta'.